The sequence spans 205 residues: Gap junction epsilon-1 protein (205 aa).

Over 1-23 the chain is Cytoplasmic; the sequence is MSLNYIKNFYEGCVKPPTVIGQF. Residues 24-44 form a helical membrane-spanning segment; that stretch reads HTLFFGSIRIFFLGVLGFAVY. At 45 to 76 the chain is on the extracellular side; the sequence is GNEALHFICDPDKREVNLFCYNQFRPITPQVS. 2 disulfides stabilise this stretch: C53/C161 and C64/C148. The helical transmembrane segment at 77 to 97 threads the bilayer; sequence FSALQLVIVLVPGALFHLYAA. The Cytoplasmic segment spans residues 98–112; that stretch reads CKSINQECILQKPIY. A helical transmembrane segment spans residues 113–133; it reads TIIYILSVLLRISLAAIAFWL. Topologically, residues 134–170 are extracellular; that stretch reads QIYLFGFQVKSLYLCDARSLGENMIIRCMVPEHFEKT. A helical membrane pass occupies residues 171–191; it reads IFLIAINTFTTITILLFVAEI. The Cytoplasmic portion of the chain corresponds to 192-205; that stretch reads FEIIFRRLYFPFRQ.

Belongs to the connexin family. Beta-type (group I) subfamily. A connexon is composed of a hexamer of connexins. Not detected in lens or retina.

The protein localises to the cell membrane. Mediates calcium-independent ATP release, suggesting activity as a hemichannel. Does not form functional gap junctions. The protein is Gap junction epsilon-1 protein (GJE1) of Homo sapiens (Human).